The chain runs to 493 residues: Beta-amyrin 11-oxidase (493 aa).

Residues 7 to 23 (CMSAATLLVCYIFGSKF) traverse the membrane as a helical segment. C439 provides a ligand contact to heme.

The protein belongs to the cytochrome P450 family. Heme is required as a cofactor. In terms of tissue distribution, expressed in roots and stolons. Not detected in leaves and stems.

The protein localises to the membrane. The catalysed reaction is beta-amyrin + 2 reduced [NADPH--hemoprotein reductase] + 2 O2 = 11-oxo-beta-amyrin + 2 oxidized [NADPH--hemoprotein reductase] + 3 H2O + 2 H(+). It catalyses the reaction beta-amyrin + reduced [NADPH--hemoprotein reductase] + O2 = 11alpha-hydroxy-beta-amyrin + oxidized [NADPH--hemoprotein reductase] + H2O + H(+). It carries out the reaction 11alpha-hydroxy-beta-amyrin + reduced [NADPH--hemoprotein reductase] + O2 = 11-oxo-beta-amyrin + oxidized [NADPH--hemoprotein reductase] + 2 H2O + H(+). Its function is as follows. Involved in the biosynthesis of Glycyrrhetinic acid (GA), a natural product which exhibits anti-inflammatory activity. Catalyzes 2 successive oxidations of beta-amyrin, producing a precursor of the triterpene sweetener glycyrrhizin. Unable to use 11-deoxoglycyrrhetinic acid or ent-kaurenoic acid as substrates. This Glycyrrhiza uralensis (Chinese licorice) protein is Beta-amyrin 11-oxidase.